Consider the following 414-residue polypeptide: Tryptophan synthase beta chain (414 aa).

The tract at residues 1–26 (MVSTFSRQDQNYKNDDLNQPSKEGRF) is disordered. Positions 10-26 (QNYKNDDLNQPSKEGRF) are enriched in basic and acidic residues. N6-(pyridoxal phosphate)lysine is present on K109.

This sequence belongs to the TrpB family. As to quaternary structure, tetramer of two alpha and two beta chains. Pyridoxal 5'-phosphate is required as a cofactor.

The catalysed reaction is (1S,2R)-1-C-(indol-3-yl)glycerol 3-phosphate + L-serine = D-glyceraldehyde 3-phosphate + L-tryptophan + H2O. The protein operates within amino-acid biosynthesis; L-tryptophan biosynthesis; L-tryptophan from chorismate: step 5/5. In terms of biological role, the beta subunit is responsible for the synthesis of L-tryptophan from indole and L-serine. The sequence is that of Tryptophan synthase beta chain from Prochlorococcus marinus (strain MIT 9312).